The primary structure comprises 473 residues: Lipid A galacturonosyltransferase RgtD (473 aa).

The next 10 membrane-spanning stretches (helical) occupy residues 6-26, 68-88, 94-114, 118-138, 160-180, 190-210, 238-258, 271-291, 295-315, and 327-347; these read GLLI…FDAT, AIYW…LVLM, FVGP…PGVA, VFFS…LAYF, FLTK…LLLI, VIIA…WNLQ, FFAA…LWAV, KMLV…ATVA, ANWA…LLYL, and INGI…QLLL.

The protein resides in the cell membrane. It functions in the pathway bacterial outer membrane biogenesis; LPS lipid A biosynthesis. Its function is as follows. Involved in the modification of the lipopolysaccharide (LPS) lipid A moiety. Catalyzes the transfer of a galacturonic acid (GalA) residue to the 4'-position of 4'-dephosphorylated lipid A, using dodecaprenyl phosphate-GalA as the donor substrate. Acts before the other GalA transferases RgtA, RgtB and RgtC. The chain is Lipid A galacturonosyltransferase RgtD from Rhizobium johnstonii (strain DSM 114642 / LMG 32736 / 3841) (Rhizobium leguminosarum bv. viciae).